Consider the following 420-residue polypeptide: Na(+)/H(+) antiporter NhaA (420 aa).

10 helical membrane-spanning segments follow: residues 34-54, 69-89, 107-127, 141-161, 168-190, 194-213, 271-291, 301-321, 342-362, and 374-394; these read TTGG…ANLG, LTIE…IAGL, LVPI…YTLF, IPMA…GAGL, FLLT…FFST, IWWL…MQHF, WSAG…HVSG, PISL…ITLG, IIAV…MTDL, and AKAS…AMLH.

This sequence belongs to the NhaA Na(+)/H(+) (TC 2.A.33) antiporter family.

It localises to the cell membrane. The catalysed reaction is Na(+)(in) + 2 H(+)(out) = Na(+)(out) + 2 H(+)(in). Its function is as follows. Na(+)/H(+) antiporter that extrudes sodium in exchange for external protons. This is Na(+)/H(+) antiporter NhaA from Cutibacterium acnes (strain DSM 16379 / KPA171202) (Propionibacterium acnes).